The sequence spans 178 residues: Large ribosomal subunit protein uL6 (178 aa).

It belongs to the universal ribosomal protein uL6 family. Part of the 50S ribosomal subunit.

Its function is as follows. This protein binds to the 23S rRNA, and is important in its secondary structure. It is located near the subunit interface in the base of the L7/L12 stalk, and near the tRNA binding site of the peptidyltransferase center. This chain is Large ribosomal subunit protein uL6, found in Limosilactobacillus fermentum (strain NBRC 3956 / LMG 18251) (Lactobacillus fermentum).